Reading from the N-terminus, the 168-residue chain is Ribosome maturation factor RimM (168 aa).

The PRC barrel domain occupies 97–168 (PNEYYYYELL…RLVVKVPEWI (72 aa)).

Belongs to the RimM family. In terms of assembly, binds ribosomal protein uS19.

The protein resides in the cytoplasm. In terms of biological role, an accessory protein needed during the final step in the assembly of 30S ribosomal subunit, possibly for assembly of the head region. Essential for efficient processing of 16S rRNA. May be needed both before and after RbfA during the maturation of 16S rRNA. It has affinity for free ribosomal 30S subunits but not for 70S ribosomes. In Pseudothermotoga lettingae (strain ATCC BAA-301 / DSM 14385 / NBRC 107922 / TMO) (Thermotoga lettingae), this protein is Ribosome maturation factor RimM.